A 514-amino-acid chain; its full sequence is Membrane-bound lytic murein transglycosylase F (514 aa).

The N-terminal stretch at 1–30 (MKKLKINYLFIGILTLLLAAALWPSIPWFG) is a signal peptide. The tract at residues 31–269 (KTENHIAAIQ…RIEEKYLGHG (239 aa)) is non-LT domain. The tract at residues 270-514 (DDFDYVDTRS…LFTPQKKEEK (245 aa)) is LT domain. Residue glutamate 314 is part of the active site.

The protein in the N-terminal section; belongs to the bacterial solute-binding protein 3 family. This sequence in the C-terminal section; belongs to the transglycosylase Slt family.

It localises to the cell outer membrane. The catalysed reaction is Exolytic cleavage of the (1-&gt;4)-beta-glycosidic linkage between N-acetylmuramic acid (MurNAc) and N-acetylglucosamine (GlcNAc) residues in peptidoglycan, from either the reducing or the non-reducing ends of the peptidoglycan chains, with concomitant formation of a 1,6-anhydrobond in the MurNAc residue.. In terms of biological role, murein-degrading enzyme that degrades murein glycan strands and insoluble, high-molecular weight murein sacculi, with the concomitant formation of a 1,6-anhydromuramoyl product. Lytic transglycosylases (LTs) play an integral role in the metabolism of the peptidoglycan (PG) sacculus. Their lytic action creates space within the PG sacculus to allow for its expansion as well as for the insertion of various structures such as secretion systems and flagella. The chain is Membrane-bound lytic murein transglycosylase F from Salmonella paratyphi A (strain ATCC 9150 / SARB42).